The sequence spans 258 residues: Eukaryotic translation initiation factor 3 subunit J (258 aa).

The span at 1–11 (MAAAAAAAGDS) shows a compositional bias: low complexity. Residues 1–108 (MAAAAAAAGD…LEEPEEPKVL (108 aa)) are disordered. Ala2 bears the N-acetylalanine mark. The tract at residues 2–69 (AAAAAAAGDS…KEEAEVKPEV (68 aa)) is sufficient for interaction with EIF3B. Phosphoserine is present on residues Ser11, Ser13, and Ser20. Positions 40–59 (EGEDEDEDVKDNWDDDDDEK) are enriched in acidic residues. Basic and acidic residues predominate over residues 60-106 (KEEAEVKPEVKISEKKKIAEKIKEKERQQKKRQEEIKKRLEEPEEPK). A coiled-coil region spans residues 70-135 (KISEKKKIAE…ESDLELAKET (66 aa)). Lys106 is covalently cross-linked (Glycyl lysine isopeptide (Lys-Gly) (interchain with G-Cter in SUMO2)). Thr109 is subject to Phosphothreonine. Ser127 carries the post-translational modification Phosphoserine. Positions 217–238 (SKAKKKKKGVVPGGGLKATMKD) are disordered. Residues 243-258 (YGGYDGGYVQDYEDFM) form a promotes stable association with the 40S ribosome region. The residue at position 254 (Tyr254) is a Phosphotyrosine.

As to quaternary structure, component of the eukaryotic translation initiation factor 3 (eIF-3) complex, which is composed of 13 subunits: EIF3A, EIF3B, EIF3C, EIF3D, EIF3E, EIF3F, EIF3G, EIF3H, EIF3I, EIF3J, EIF3K, EIF3L and EIF3M. The eIF-3 complex appears to include 3 stable modules: module A is composed of EIF3A, EIF3B, EIF3G and EIF3I; module B is composed of EIF3F, EIF3H, and EIF3M; and module C is composed of EIF3C, EIF3D, EIF3E, EIF3K and EIF3L. EIF3C of module C binds EIF3B of module A and EIF3H of module B, thereby linking the three modules. EIF3J is a labile subunit that binds to the eIF-3 complex via EIF3B. The eIF-3 complex interacts with RPS6KB1 under conditions of nutrient depletion. Mitogenic stimulation leads to binding and activation of a complex composed of MTOR and RPTOR, leading to phosphorylation and release of RPS6KB1 and binding of EIF4B to eIF-3. In terms of processing, phosphorylated. Phosphorylation is enhanced upon serum stimulation.

The protein resides in the cytoplasm. In terms of biological role, component of the eukaryotic translation initiation factor 3 (eIF-3) complex, which is required for several steps in the initiation of protein synthesis. The eIF-3 complex associates with the 40S ribosome and facilitates the recruitment of eIF-1, eIF-1A, eIF-2:GTP:methionyl-tRNAi and eIF-5 to form the 43S pre-initiation complex (43S PIC). The eIF-3 complex stimulates mRNA recruitment to the 43S PIC and scanning of the mRNA for AUG recognition. The eIF-3 complex is also required for disassembly and recycling of post-termination ribosomal complexes and subsequently prevents premature joining of the 40S and 60S ribosomal subunits prior to initiation. The eIF-3 complex specifically targets and initiates translation of a subset of mRNAs involved in cell proliferation, including cell cycling, differentiation and apoptosis, and uses different modes of RNA stem-loop binding to exert either translational activation or repression. The polypeptide is Eukaryotic translation initiation factor 3 subunit J (Homo sapiens (Human)).